The following is a 1554-amino-acid chain: Myosin-2 (1554 aa).

The region spanning 4–57 is the Myosin N-terminal SH3-like domain; sequence EVGTRCWYPDKQQGWIGGEITKHTNLSNKHQLELTLEDNQIVEIESETLDETKD. The 705-residue stretch at 70 to 774 folds into the Myosin motor domain; it reads EATEDLTSLS…MLAYLEKLRS (705 aa). 164–171 contributes to the ATP binding site; the sequence is GESGAGKT. The segment at 443 to 523 is actin-binding; it reads FIGVLDIYGF…LGILSLLDEE (81 aa). IQ domains follow at residues 778–798, 800–824, 825–847, 848–872, 873–895, and 896–925; these read HNSS…KKYL, IISS…DLEF, KTQA…KTIS, LLSA…LQRR, QRDA…SFNT, and TRRS…EAKS. The stretch at 926–1079 forms a coiled coil; sequence VNHLKEVSYK…IARLQAAVRS (154 aa). Residues 1080 to 1554 form a non alpha-helical, tail domain region; sequence GVTSSTITST…VTVQESQRTE (475 aa). Over residues 1082–1093 the composition is skewed to low complexity; it reads TSSTITSTPTAS. The disordered stretch occupies residues 1082–1109; that stretch reads TSSTITSTPTASRRFSAHSSVADGTSPR. Polar residues predominate over residues 1098–1109; it reads AHSSVADGTSPR. The Dilute domain occupies 1205–1480; it reads AEVLSTIQKL…LNFVADRVKK (276 aa).

The protein belongs to the TRAFAC class myosin-kinesin ATPase superfamily. Myosin family. As to quaternary structure, homodimer. Interacts with calmodulin (CMD1) and the myosin light chain MLC1 through its IQ repeats.

In terms of biological role, myosin heavy chain that is required for the cell cycle-regulated transport of various organelles and proteins for their segregation. Functions by binding with its tail domain to receptor proteins on organelles and exerting force with its N-terminal motor domain against actin filaments, thereby transporting its cargo along polarized actin cables. This Lachancea kluyveri (strain ATCC 58438 / CBS 3082 / BCRC 21498 / NBRC 1685 / JCM 7257 / NCYC 543 / NRRL Y-12651) (Yeast) protein is Myosin-2 (MYO2).